A 375-amino-acid polypeptide reads, in one-letter code: Tubulinyl-Tyr carboxypeptidase 1 (375 aa).

A compositionally biased stretch (low complexity) spans 1–33 (MPGGKKVVPSGSSSASPNAAATTTAAAAAAAAA). The tract at residues 1-69 (MPGGKKVVPS…EEDLRDGGVP (69 aa)) is disordered. Residues 53-63 (EEPEEEGEEDL) show a composition bias toward acidic residues. Catalysis depends on residues Cys179, His214, and Ser231. The tract at residues 309–375 (RDMRLKIGKG…PDLSGYQIRV (67 aa)) is disordered. The interval 329 to 375 (KKDVSSPQRAQSSPHRRNSRSERRPSGEKKPAEPKAMPDLSGYQIRV) is involved in heparin-binding and antiangiogenic activity. Over residues 347-361 (SRSERRPSGEKKPAE) the composition is skewed to basic and acidic residues.

This sequence belongs to the transglutaminase-like superfamily. Vasohibin family. Interacts with SVBP; interaction enhances VASH1 tyrosine carboxypeptidase activity. Post-translationally, ubiquitinated in vitro. As to expression, expressed at low level in proliferating endothelial cells at the sprouting front but highly expressed in nonproliferating endothelial cells in the termination zone.

The protein resides in the cytoplasm. Its subcellular location is the secreted. The enzyme catalyses C-terminal L-alpha-aminoacyl-L-glutamyl-L-glutamyl-L-tyrosyl-[tubulin] + H2O = C-terminal L-alpha-aminoacyl-L-glutamyl-L-glutamyl-[tubulin] + L-tyrosine. In terms of biological role, tyrosine carboxypeptidase that removes the C-terminal tyrosine residue of alpha-tubulin, thereby regulating microtubule dynamics and function. Acts as an angiogenesis inhibitor: inhibits migration, proliferation and network formation by endothelial cells as well as angiogenesis. This inhibitory effect is selective to endothelial cells as it does not affect the migration of smooth muscle cells or fibroblasts. The protein is Tubulinyl-Tyr carboxypeptidase 1 of Mus musculus (Mouse).